Consider the following 1162-residue polypeptide: Lysine-specific demethylase 2A (1162 aa).

Serine 28 carries the phosphoserine modification. Positions 148–316 constitute a JmjC domain; that stretch reads FSHTRLENMV…MQLKIYNIED (169 aa). Threonine 209 provides a ligand contact to substrate. Fe cation contacts are provided by histidine 212 and aspartate 214. A substrate-binding site is contributed by lysine 229. Histidine 284 is a Fe cation binding site. A disordered region spans residues 367–389; it reads GLESGNGDEEAVDREPRRLSSRR. Serine 390 and serine 394 each carry phosphoserine. A Glycyl lysine isopeptide (Lys-Gly) (interchain with G-Cter in SUMO2) cross-link involves residue lysine 505. The disordered stretch occupies residues 532–557; sequence VPTIPITKPHTMKPAPRLTPVRPAAA. Position 550 is a phosphothreonine (threonine 550). At serine 558 the chain carries Phosphoserine. The segment at 564-610 adopts a CXXC-type zinc-finger fold; sequence ARRRRVRCRKCKACVQGECGVCHYCRDMKKFGGPGRMKQSCVLRQCL. Residues cysteine 571, cysteine 574, cysteine 577, cysteine 582, cysteine 585, cysteine 588, cysteine 604, cysteine 609, cysteine 620, and cysteine 623 each coordinate Zn(2+). The PHD-type zinc-finger motif lies at 617 to 678; that stretch reads SVTCSLCGEV…CWECPKCYQE (62 aa). Position 632 is a phosphothreonine (threonine 632). Zn(2+)-binding residues include cysteine 642, cysteine 645, histidine 650, cysteine 653, cysteine 672, and cysteine 675. Phosphoserine is present on serine 692. The segment at 704-789 is disordered; it reads PLRSCDEPLT…PSGKKELSEV (86 aa). Residue threonine 713 is modified to Phosphothreonine. 2 positions are modified to phosphoserine: serine 718 and serine 731. Basic and acidic residues-rich tracts occupy residues 746–757 and 771–789; these read SDHHSASRDERF and TMVREKENNPSGKKELSEV. Serine 825, serine 832, serine 869, and serine 883 each carry phosphoserine. A disordered region spans residues 839-887; the sequence is HCPARTPQRGDEEGLGGEEEEEEEEEEEDDSAEEGGAARLNGRGSWAQD. The span at 851-871 shows a compositional bias: acidic residues; sequence EGLGGEEEEEEEEEEEDDSAE. Positions 889 to 936 constitute an F-box domain; sequence DESWMQREVWMSVFRYLSRRELCECMRVCKTWYKWCCDKRLWTKIDLS. 2 LRR repeats span residues 961-982 and 984-1010; these read WTNISKKQLTWLVNRLPGLKDL and LAGCSWSAVSALSTSSCPLLRTLDLRW. The residue at position 1020 (arginine 1020) is an ADP-ribosylarginine. LRR repeat units follow at residues 1048 to 1073, 1074 to 1103, 1104 to 1128, and 1129 to 1156; these read GLDITDATLRLIIRHMPLLSRLDLSH, CSHLTDQSSNLLTAVGSSTRYSLTELNMAG, CNKLTDQTLIYLRRIANVTLIDLRG, and CKQITRKACEHFISDLSINSLYCLSDEK.

This sequence belongs to the JHDM1 histone demethylase family. Interacts with CBX5/HP1A; the interaction promotes CBX5 localization to chromatin. The SKP1-KDM2A complex interacts with UBB. Part of a SCF (SKP1-cullin-F-box) protein ligase complex. It depends on Fe(2+) as a cofactor. Mono-ADP-ribosylated at Arg-1020 in response to DNA damage, leading to displacement from chromatin, resulting in increased dimethylation of histone H3 at 'Lys-36'. Widely expressed, with highest levels in brain, testis and ovary, followed by lung.

Its subcellular location is the nucleus. The protein resides in the nucleoplasm. The protein localises to the chromosome. The enzyme catalyses N(6),N(6)-dimethyl-L-lysyl(36)-[histone H3] + 2 2-oxoglutarate + 2 O2 = L-lysyl(36)-[histone H3] + 2 formaldehyde + 2 succinate + 2 CO2. Histone demethylase that specifically demethylates 'Lys-36' of histone H3, thereby playing a central role in histone code. Preferentially demethylates dimethylated H3 'Lys-36' residue while it has weak or no activity for mono- and tri-methylated H3 'Lys-36'. May also recognize and bind to some phosphorylated proteins and promote their ubiquitination and degradation. Required to maintain the heterochromatic state. Associates with centromeres and represses transcription of small non-coding RNAs that are encoded by the clusters of satellite repeats at the centromere. Required to sustain centromeric integrity and genomic stability, particularly during mitosis. Regulates circadian gene expression by repressing the transcriptional activator activity of CLOCK-BMAL1 heterodimer and RORA in a catalytically-independent manner. This chain is Lysine-specific demethylase 2A (KDM2A), found in Homo sapiens (Human).